A 90-amino-acid chain; its full sequence is MFESEAELRRIRIALVWIAVFLLFGACGNQDTIIETDNGNSDYETPQPTSFPLEHNHFGVMEDGYIKIYEYNESRNEVKLKKEYADDELE.

The signal sequence occupies residues 1 to 26 (MFESEAELRRIRIALVWIAVFLLFGA).

This is an uncharacterized protein from Bacillus subtilis (strain 168).